The following is a 926-amino-acid chain: Storkhead-box protein 2 (926 aa).

Disordered regions lie at residues 1–32 (MKKT…RSEK), 338–391 (EEEK…HLDI), 452–529 (EMPF…SYID), 564–588 (KEPS…YGEL), 632–672 (GVKK…GGVA), 724–803 (LKSH…GTMQ), and 825–926 (LAPK…VTSV). Over residues 18 to 32 (FSDRASDRMRSRSEK) the composition is skewed to basic and acidic residues. The segment covering 353–378 (HSGRSKKSRTHRKSHGKSRSHSKTRV) has biased composition (basic residues). Over residues 379–391 (SKGDPSDGSHLDI) the composition is skewed to basic and acidic residues. Over residues 463 to 472 (SHSKVHRSHS) the composition is skewed to basic residues. Basic and acidic residues predominate over residues 473–495 (HTQDRRSRNERSNKAKERSRSMD). A compositionally biased stretch (polar residues) spans 518–529 (QDDQTPSQSYID). Over residues 632–658 (GVKKLSPSDRQVPHSSREPVGHKEESP) the composition is skewed to basic and acidic residues. Residues 746-769 (LGTSAAQAMPASQRQQESGGNQEA) are compositionally biased toward polar residues. Over residues 785–799 (GANKNTEEEKNREDV) the composition is skewed to basic and acidic residues. 2 stretches are compositionally biased toward polar residues: residues 847 to 884 (MDSS…QNPA) and 914 to 926 (KPSN…VTSV).

The polypeptide is Storkhead-box protein 2 (STOX2) (Homo sapiens (Human)).